The chain runs to 167 residues: Large ribosomal subunit protein uL10 (167 aa).

The protein belongs to the universal ribosomal protein uL10 family. In terms of assembly, part of the ribosomal stalk of the 50S ribosomal subunit. The N-terminus interacts with L11 and the large rRNA to form the base of the stalk. The C-terminus forms an elongated spine to which L12 dimers bind in a sequential fashion forming a multimeric L10(L12)X complex.

In terms of biological role, forms part of the ribosomal stalk, playing a central role in the interaction of the ribosome with GTP-bound translation factors. This chain is Large ribosomal subunit protein uL10, found in Streptococcus thermophilus (strain CNRZ 1066).